Consider the following 101-residue polypeptide: Small ribosomal subunit protein bS18c (101 aa).

Belongs to the bacterial ribosomal protein bS18 family. Part of the 30S ribosomal subunit.

The protein localises to the plastid. It is found in the chloroplast. This is Small ribosomal subunit protein bS18c from Oenothera biennis (German evening primrose).